We begin with the raw amino-acid sequence, 833 residues long: Glycerol-3-phosphate acyltransferase (833 aa).

The short motif at 309 to 314 (CHRSHI) is the HXXXXD motif element.

It belongs to the GPAT/DAPAT family.

The protein localises to the cell inner membrane. The enzyme catalyses sn-glycerol 3-phosphate + an acyl-CoA = a 1-acyl-sn-glycero-3-phosphate + CoA. The protein operates within phospholipid metabolism; CDP-diacylglycerol biosynthesis; CDP-diacylglycerol from sn-glycerol 3-phosphate: step 1/3. This is Glycerol-3-phosphate acyltransferase from Pseudomonas syringae pv. syringae (strain B728a).